The sequence spans 1046 residues: UDP-N-acetylglucosamine--peptide N-acetylglucosaminyltransferase 110 kDa subunit (1046 aa).

At Ala-2 the chain carries N-acetylalanine. 2 positions are modified to phosphoserine; by GSK3-beta; alternate: Ser-3 and Ser-4. Ser-3 and Ser-4 each carry an O-linked (GlcNAc) serine; alternate glycan. O-linked (GlcNAc) serine glycosylation is present at Asp-10. A glycan (O-linked (GlcNAc) threonine) is linked at Thr-12. An O-linked (GlcNAc) serine glycan is attached at Met-18. Residue Ser-20 is modified to Phosphoserine. Residues 21-54 (FQGLAELAHREYQAGDFEAAERHCMQLWRQEPDN) form a TPR 1 repeat. The O-linked (GlcNAc) threonine glycan is linked to Glu-38. O-linked (GlcNAc) serine glycosylation is found at Pro-52 and Gly-56. TPR repeat units lie at residues 89-122 (AEAY…KPDF), 123-156 (IDGY…NPDL), 157-190 (YCVR…QPNF), 191-224 (AVAW…DPNF), 225-258 (LDAY…SPNH), 259-292 (AVVH…QPHF), 293-326 (PDAY…CPTH), 327-360 (ADSL…FPEF), 361-394 (AAAH…SPTF), 395-428 (ADAY…NPAF), and 429-462 (ADAH…KPDF). Ser-399 is a glycosylation site (O-linked (GlcNAc) serine; by autocatalysis). Thr-454 carries the post-translational modification Phosphothreonine; by AMPK. A TPR 13; truncated repeat occupies 463-473 (PDAYCNLAHCL). Positions 464-466 (DAY) match the DFP motif motif. The Nuclear localization signal motif lies at 487–503 (KKLVSIVADQLEKNRLP). The active-site Proton acceptor is His-508. UDP is bound by residues Gln-849, Lys-852, 906–908 (APK), 911–914 (HVRR), 930–932 (HTT), and Asp-935. Tyr-989 bears the Phosphotyrosine mark. The segment at 991–1010 (KKVRGKVWKQRISSPLFNTK) is required for phosphatidylinositol 3,4,5-triphosphate binding.

Belongs to the glycosyltransferase 41 family. O-GlcNAc transferase subfamily. Monomer; may exist in different oligomerization states in cells. Homotrimer, oligomerizes via TPR repeats 6 and 7. Trimerization is not necessary for activity in vitro, however it increases affinity for UDP-GlcNAc. Component of a THAP1/THAP3-HCFC1-OGT complex. Component of the NSL complex at least composed of MOF/KAT8, KANSL1, KANSL2, KANSL3, MCRS1, PHF20, OGT1/OGT, WDR5 and HCFC1. Found in a complex with KIF5B, RHOT1, RHOT2 and TRAK1. Found in a complex composed of at least SINHCAF, SIN3A, HDAC1, SAP30, RBBP4, OGT and TET1. Component of a complex composed of KMT2E/MLL5 (isoform 3), OGT (isoform 1) and USP7; the complex stabilizes KMT2E/MLL5, preventing KMT2E/MLL5 ubiquitination and proteasomal-mediated degradation. Interacts (via TPRs 1-6) with SIN3A; the interaction mediates transcriptional repression in parallel with histone deacetylase. Interacts (via TPR 5-6) with TET1, TET2 and TET3. Interacts (via TPR repeats 6 and 7) with ATXN10. Interacts with NSD2. Interacts with PROSER1; this interaction mediates TET2 O-GlcNAcylation and stability by promoting the interaction between OGT and TET2. As to quaternary structure, interacts with USP7. In terms of assembly, (Microbial infection) Interacts with human T-cell leukemia virus 1/HTLV-1 protein Tax; this interaction increases Tax interacting partner CREB1 O-GlcNAcylation. In terms of processing, ubiquitinated by the SCF(FBXO31) complex, leading to its proteasomal degradation. Post-translationally, phosphorylation on Ser-3 or Ser-4 by GSK3-beta positively regulates its activity. Phosphorylation at Thr-454 by AMPK promotes nuclear localization. Glycosylated via autocatalysis; O-GlcNAcylation at Ser-399 promotes nuclear localization. In terms of processing, glycosylated via autocatalysis; does not affect the enzyme activity but regulates substrate selectivity. Highly expressed in pancreas and to a lesser extent in skeletal muscle, heart, brain and placenta. Present in trace amounts in lung and liver.

The protein resides in the nucleus. It is found in the cytoplasm. Its subcellular location is the mitochondrion. The protein localises to the membrane. It localises to the cell membrane. The protein resides in the mitochondrion membrane. It is found in the cell projection. The catalysed reaction is L-seryl-[protein] + UDP-N-acetyl-alpha-D-glucosamine = 3-O-(N-acetyl-beta-D-glucosaminyl)-L-seryl-[protein] + UDP + H(+). It catalyses the reaction L-threonyl-[protein] + UDP-N-acetyl-alpha-D-glucosamine = 3-O-(N-acetyl-beta-D-glucosaminyl)-L-threonyl-[protein] + UDP + H(+). Its pathway is protein modification; protein glycosylation. Subject to product inhibition by UDP. In terms of biological role, catalyzes the transfer of a single N-acetylglucosamine from UDP-GlcNAc to a serine or threonine residue in cytoplasmic and nuclear proteins resulting in their modification with a beta-linked N-acetylglucosamine (O-GlcNAc). Glycosylates a large and diverse number of proteins including histone H2B, AKT1, AMPK, ATG4B, CAPRIN1, EZH2, FNIP1, GSDMD, KRT7, LMNA, LMNB1, LMNB2, RPTOR, HOXA1, PFKL, KMT2E/MLL5, MAPT/TAU, TET2, RBL2, RET, NOD2 and HCFC1. Can regulate their cellular processes via cross-talk between glycosylation and phosphorylation or by affecting proteolytic processing. Involved in insulin resistance in muscle and adipocyte cells via glycosylating insulin signaling components and inhibiting the 'Thr-308' phosphorylation of AKT1, enhancing IRS1 phosphorylation and attenuating insulin signaling. Involved in glycolysis regulation by mediating glycosylation of 6-phosphofructokinase PFKL, inhibiting its activity. Plays a key role in chromatin structure by mediating O-GlcNAcylation of 'Ser-112' of histone H2B: recruited to CpG-rich transcription start sites of active genes via its interaction with TET proteins (TET1, TET2 or TET3). As part of the NSL complex indirectly involved in acetylation of nucleosomal histone H4 on several lysine residues. O-GlcNAcylation of 'Ser-75' of EZH2 increases its stability, and facilitating the formation of H3K27me3 by the PRC2/EED-EZH2 complex. Stabilizes KMT2E/MLL5 by mediating its glycosylation, thereby preventing KMT2E/MLL5 ubiquitination. Regulates circadian oscillation of the clock genes and glucose homeostasis in the liver. Stabilizes clock proteins BMAL1 and CLOCK through O-glycosylation, which prevents their ubiquitination and subsequent degradation. Promotes the CLOCK-BMAL1-mediated transcription of genes in the negative loop of the circadian clock such as PER1/2 and CRY1/2. O-glycosylates HCFC1 and regulates its proteolytic processing and transcriptional activity. Component of a THAP1/THAP3-HCFC1-OGT complex that is required for the regulation of the transcriptional activity of RRM1. Regulates mitochondrial motility in neurons by mediating glycosylation of TRAK1. Promotes autophagy by mediating O-glycosylation of ATG4B. Acts as a regulator of mTORC1 signaling by mediating O-glycosylation of RPTOR and FNIP1: O-GlcNAcylation of RPTOR in response to glucose sufficiency promotes activation of the mTORC1 complex. Its function is as follows. The mitochondrial isoform (mOGT) is cytotoxic and triggers apoptosis in several cell types including INS1, an insulinoma cell line. Has N-acetylglucosaminyltransferase activity: glycosylates proteins, such as HNRNPU, NEUROD1, NUP62 and PDCD6IP. Displays specific substrate selectivity compared to other isoforms. The polypeptide is UDP-N-acetylglucosamine--peptide N-acetylglucosaminyltransferase 110 kDa subunit (Homo sapiens (Human)).